The primary structure comprises 166 residues: NAD(P)H-quinone oxidoreductase subunit I, chloroplastic (166 aa).

4Fe-4S ferredoxin-type domains are found at residues Gly-55–Lys-84 and Leu-95–Glu-124. Residues Cys-64, Cys-67, Cys-70, Cys-74, Cys-104, Cys-107, Cys-110, and Cys-114 each coordinate [4Fe-4S] cluster.

It belongs to the complex I 23 kDa subunit family. NDH is composed of at least 16 different subunits, 5 of which are encoded in the nucleus. [4Fe-4S] cluster serves as cofactor.

The protein localises to the plastid. It is found in the chloroplast thylakoid membrane. The enzyme catalyses a plastoquinone + NADH + (n+1) H(+)(in) = a plastoquinol + NAD(+) + n H(+)(out). It carries out the reaction a plastoquinone + NADPH + (n+1) H(+)(in) = a plastoquinol + NADP(+) + n H(+)(out). In terms of biological role, NDH shuttles electrons from NAD(P)H:plastoquinone, via FMN and iron-sulfur (Fe-S) centers, to quinones in the photosynthetic chain and possibly in a chloroplast respiratory chain. The immediate electron acceptor for the enzyme in this species is believed to be plastoquinone. Couples the redox reaction to proton translocation, and thus conserves the redox energy in a proton gradient. In Oxypappus scaber, this protein is NAD(P)H-quinone oxidoreductase subunit I, chloroplastic.